Reading from the N-terminus, the 256-residue chain is Proteasome subunit beta type-5 (256 aa).

A propeptide spans 1-55 (removed in mature form); that stretch reads CNMALADIVRLPPASEAPFAPLGAPRDLSGPPSKLAVRPWGGADLPGPGLQLLHG. T56 (nucleophile) is an active-site residue.

Belongs to the peptidase T1B family. In terms of assembly, the 26S proteasome consists of a 20S proteasome core and two 19S regulatory subunits. The 20S proteasome core is a barrel-shaped complex made of 28 subunits that are arranged in four stacked rings. The two outer rings are each formed by seven alpha subunits, and the two inner rings are formed by seven beta subunits. The proteolytic activity is exerted by three beta-subunits PSMB5, PSMB6 and PSMB7. Directly interacts with POMP. Interacts with ABCB1 and TAP1.

The protein localises to the cytoplasm. The protein resides in the nucleus. The enzyme catalyses Cleavage of peptide bonds with very broad specificity.. Functionally, component of the 20S core proteasome complex involved in the proteolytic degradation of most intracellular proteins. This complex plays numerous essential roles within the cell by associating with different regulatory particles. Associated with two 19S regulatory particles, forms the 26S proteasome and thus participates in the ATP-dependent degradation of ubiquitinated proteins. The 26S proteasome plays a key role in the maintenance of protein homeostasis by removing misfolded or damaged proteins that could impair cellular functions, and by removing proteins whose functions are no longer required. Associated with the PA200 or PA28, the 20S proteasome mediates ubiquitin-independent protein degradation. This type of proteolysis is required in several pathways including spermatogenesis (20S-PA200 complex) or generation of a subset of MHC class I-presented antigenic peptides (20S-PA28 complex). Within the 20S core complex, PSMB5 displays a chymotrypsin-like activity. The polypeptide is Proteasome subunit beta type-5 (PSMB5) (Gallus gallus (Chicken)).